Consider the following 443-residue polypeptide: Glutamyl-tRNA reductase (443 aa).

Residues 49–52, serine 109, 114–116, and glutamine 120 each bind substrate; these read TCNR and ETQ. The active-site Nucleophile is cysteine 50. 189–194 is an NADP(+) binding site; the sequence is GAGKMS.

Belongs to the glutamyl-tRNA reductase family. Homodimer.

The catalysed reaction is (S)-4-amino-5-oxopentanoate + tRNA(Glu) + NADP(+) = L-glutamyl-tRNA(Glu) + NADPH + H(+). The protein operates within porphyrin-containing compound metabolism; protoporphyrin-IX biosynthesis; 5-aminolevulinate from L-glutamyl-tRNA(Glu): step 1/2. Its function is as follows. Catalyzes the NADPH-dependent reduction of glutamyl-tRNA(Glu) to glutamate 1-semialdehyde (GSA). The sequence is that of Glutamyl-tRNA reductase from Heliobacterium mobile (Heliobacillus mobilis).